A 300-amino-acid polypeptide reads, in one-letter code: uncharacterized protein (300 aa).

2 disordered regions span residues 167–186 and 224–244; these read DVFLNSSPPPHTAQVSHHEH and ADGSSLETSSMSSPRPEDASH. Residues 224-236 are compositionally biased toward polar residues; sequence ADGSSLETSSMSS.

This is an uncharacterized protein from Rattus norvegicus (Rat).